A 489-amino-acid chain; its full sequence is Glutamate--tRNA ligase (489 aa).

The 'HIGH' region signature appears at 12–22 (PSPTGIPHVGM). The 'KMSKS' region signature appears at 256-260 (KLSKR). Residue lysine 259 coordinates ATP.

The protein belongs to the class-I aminoacyl-tRNA synthetase family. Glutamate--tRNA ligase type 1 subfamily. Monomer.

The protein resides in the cytoplasm. It carries out the reaction tRNA(Glu) + L-glutamate + ATP = L-glutamyl-tRNA(Glu) + AMP + diphosphate. Functionally, catalyzes the attachment of glutamate to tRNA(Glu) in a two-step reaction: glutamate is first activated by ATP to form Glu-AMP and then transferred to the acceptor end of tRNA(Glu). The polypeptide is Glutamate--tRNA ligase (Mycobacterium ulcerans (strain Agy99)).